We begin with the raw amino-acid sequence, 348 residues long: AT-hook motif nuclear-localized protein 9 (348 aa).

Residues 18–156 (HRGLSGSGPP…MASVGELMPS (139 aa)) are disordered. The span at 31–46 (GSPQQQQGLRHLPNQN) shows a compositional bias: polar residues. Over residues 47-60 (SPFGSGSTGFGSPS) the composition is skewed to low complexity. The Bipartite nuclear localization signal motif lies at 98–106 (KRKRGRPRK). Residues 98–110 (KRKRGRPRKYGQD) constitute a DNA-binding region (a.T hook 1). The span at 112-131 (SVSLALSSSSVSTITPNNSN) shows a compositional bias: low complexity. The a.T hook 2 DNA-binding region spans 132-144 (KRGRGRPPGSGKK). The PPC domain maps to 157-299 (SSGMSFTPHV…EEEASEVVQE (143 aa)).

It localises to the nucleus. Functionally, transcription factor that specifically binds AT-rich DNA sequences related to the nuclear matrix attachment regions (MARs). The protein is AT-hook motif nuclear-localized protein 9 of Arabidopsis thaliana (Mouse-ear cress).